The sequence spans 390 residues: 5-hydroxytryptamine receptor 1B (390 aa).

The Extracellular segment spans residues 1–46 (MEEPGAQCAPPXPAGSETWVPQANLSSAPSQNCSAKDYIYQDSIAL). Asn-24 and Asn-32 each carry an N-linked (GlcNAc...) asparagine glycan. A helical transmembrane segment spans residues 47-72 (PWKVLLVMLLALITLATTLSNAFVIA). Residues 73 to 86 (TVYRTRKLHTPANY) lie on the Cytoplasmic side of the membrane. A helical membrane pass occupies residues 87 to 111 (LIASLAVTDLLVSILVMPISTMYTV). At 112–119 (TGRWTLGQ) the chain is on the extracellular side. Residues 120–145 (VVCDFWLSSDITCCTASILHLCVIAL) form a helical membrane-spanning segment. Cys-122 and Cys-199 form a disulfide bridge. Residues Asp-129 and Thr-134 each contribute to the ergotamine site. The short motif at 146 to 148 (DRY) is the DRY motif; important for ligand-induced conformation changes and signaling element. At 146–165 (DRYWAITDAVEYSAKRTPKR) the chain is on the cytoplasmic side. A helical membrane pass occupies residues 166 to 184 (AAVMIALVWVFSISISLPP). Residues 185–205 (FFWRQAKAEEEVSECVVNTDH) lie on the Extracellular side of the membrane. Val-201 contributes to the ergotamine binding site. Residues 206 to 229 (ILYTVYSTVGAFYFPTLLLIALYG) form a helical membrane-spanning segment. Topologically, residues 230 to 315 (RIYVEARSRI…AARERKATKT (86 aa)) are cytoplasmic. The span at 259–272 (DSPGSTSSVTSINS) shows a compositional bias: polar residues. The disordered stretch occupies residues 259 to 281 (DSPGSTSSVTSINSRVPDVPSES). Residues 316-337 (LGIILGAFIVCWLPFFIISLVM) traverse the membrane as a helical segment. The Extracellular segment spans residues 338 to 347 (PICKDACWFH). Residues 348 to 370 (LAIFDFFTWLGYLNSLINPIIYT) form a helical membrane-spanning segment. An NPxxY motif; important for ligand-induced conformation changes and signaling motif is present at residues 365–369 (NPIIY). Residues 371 to 390 (MSNEDFKQAFHKLIRFKCTS) lie on the Cytoplasmic side of the membrane. A lipid anchor (S-palmitoyl cysteine) is attached at Cys-388.

This sequence belongs to the G-protein coupled receptor 1 family. In terms of assembly, homodimer. Heterodimer with HTR1D. In terms of processing, phosphorylated. Desensitization of the receptor may be mediated by its phosphorylation. Post-translationally, palmitoylated.

The protein resides in the cell membrane. Functionally, G-protein coupled receptor for 5-hydroxytryptamine (serotonin). Also functions as a receptor for ergot alkaloid derivatives, various anxiolytic and antidepressant drugs and other psychoactive substances, such as lysergic acid diethylamide (LSD). Ligand binding causes a conformation change that triggers signaling via guanine nucleotide-binding proteins (G proteins) and modulates the activity of downstream effectors, such as adenylate cyclase. HTR1B is coupled to G(i)/G(o) G alpha proteins and mediates inhibitory neurotransmission by inhibiting adenylate cyclase activity. Arrestin family members inhibit signaling via G proteins and mediate activation of alternative signaling pathways. Regulates the release of 5-hydroxytryptamine, dopamine and acetylcholine in the brain, and thereby affects neural activity, nociceptive processing, pain perception, mood and behavior. Besides, plays a role in vasoconstriction of cerebral arteries. This is 5-hydroxytryptamine receptor 1B (HTR1B) from Gorilla gorilla gorilla (Western lowland gorilla).